Reading from the N-terminus, the 964-residue chain is Protein translocase subunit SecA (964 aa).

ATP contacts are provided by residues Gln86, 104-108, and Asp494; that span reads GEGKT. Residues 848–964 are disordered; the sequence is AESADTIAVA…YKMCHGQNEK (117 aa). Residues 871–882 show a composition bias toward acidic residues; that stretch reads AEGEVEEEDEDT. Residues 889 to 900 show a composition bias toward low complexity; that stretch reads AESAAASGAGES. Zn(2+)-binding residues include Cys947, Cys949, Cys958, and His959.

It belongs to the SecA family. In terms of assembly, monomer and homodimer. Part of the essential Sec protein translocation apparatus which comprises SecA, SecYEG and auxiliary proteins SecDF. Other proteins may also be involved. Zn(2+) is required as a cofactor.

Its subcellular location is the cell membrane. The protein localises to the cytoplasm. The enzyme catalyses ATP + H2O + cellular proteinSide 1 = ADP + phosphate + cellular proteinSide 2.. Part of the Sec protein translocase complex. Interacts with the SecYEG preprotein conducting channel. Has a central role in coupling the hydrolysis of ATP to the transfer of proteins into and across the cell membrane, serving as an ATP-driven molecular motor driving the stepwise translocation of polypeptide chains across the membrane. This is Protein translocase subunit SecA from Bifidobacterium longum (strain NCC 2705).